Consider the following 614-residue polypeptide: ATP-dependent zinc metalloprotease FtsH (614 aa).

Topologically, residues 1–7 (MKKQWKK) are stromal. The chain crosses the membrane as a helical span at residues 8-28 (IVLFVLPVIITLITLSSFLFY). Residues 29–116 (NQDVVHNWSS…AHPSSSNVNL (88 aa)) are Lumenal-facing. The helical transmembrane segment at 117–137 (VSWLSNLLLPLILIITLFFFF) threads the bilayer. Residues 138–614 (RRGNKSSSGP…EFMRIVEERV (477 aa)) lie on the Stromal side of the membrane. 211–218 (GPPGTGKT) contributes to the ATP binding site. Position 432 (His-432) interacts with Zn(2+). Glu-433 is a catalytic residue. The Zn(2+) site is built by His-436 and Asp-510.

It in the central section; belongs to the AAA ATPase family. This sequence in the C-terminal section; belongs to the peptidase M41 family. As to quaternary structure, homohexamer. It depends on Zn(2+) as a cofactor.

It is found in the plastid. The protein resides in the chloroplast thylakoid membrane. Acts as a processive, ATP-dependent zinc metallopeptidase. This chain is ATP-dependent zinc metalloprotease FtsH, found in Cyanidium caldarium (Red alga).